The following is a 358-amino-acid chain: Peptide chain release factor 1 (358 aa).

An N5-methylglutamine modification is found at Gln-234.

Belongs to the prokaryotic/mitochondrial release factor family. Post-translationally, methylated by PrmC. Methylation increases the termination efficiency of RF1.

It is found in the cytoplasm. Functionally, peptide chain release factor 1 directs the termination of translation in response to the peptide chain termination codons UAG and UAA. The sequence is that of Peptide chain release factor 1 from Leifsonia xyli subsp. xyli (strain CTCB07).